A 241-amino-acid chain; its full sequence is MIKLEKVSFTYKNRAALCDVNVDINEGEAVAIIGPNGSGKSTFLKVLNGILFPSSGRYVFDNNEINENTLKNNKFLKLFHKRVGFVFQNSDAQLFCSTVFDEVAFGIMQMGLEGEEVDKRVRDCLKLLNIEKLKEEHPYNLSGGEKKRVAIASVLAMNPEVITLDEPMNAIDPKGKRFLKELLIDLNKSGKTIICATHDFEYIEGVFNRAVVFSENHKIIRDDRYENIISDREFLMECNII.

Residues 2–241 (IKLEKVSFTY…REFLMECNII (240 aa)) enclose the ABC transporter domain. 34-41 (GPNGSGKS) serves as a coordination point for ATP.

It belongs to the ABC transporter superfamily.

The protein localises to the cell membrane. Functionally, probably part of an ABC transporter complex. Responsible for energy coupling to the transport system. In Clostridium acetobutylicum (strain ATCC 824 / DSM 792 / JCM 1419 / IAM 19013 / LMG 5710 / NBRC 13948 / NRRL B-527 / VKM B-1787 / 2291 / W), this protein is Putative ABC transporter ATP-binding protein CA_C0773.